The following is a 311-amino-acid chain: tRNA pseudouridine synthase B (311 aa).

Residue aspartate 49 is the Nucleophile of the active site.

It belongs to the pseudouridine synthase TruB family. Type 1 subfamily.

The enzyme catalyses uridine(55) in tRNA = pseudouridine(55) in tRNA. Functionally, responsible for synthesis of pseudouridine from uracil-55 in the psi GC loop of transfer RNAs. This is tRNA pseudouridine synthase B from Rhizobium meliloti (strain 1021) (Ensifer meliloti).